Reading from the N-terminus, the 34-residue chain is Calcitonin-like peptide 1 (34 aa).

An intrachain disulfide couples Cys2 to Cys7. Pro34 carries the post-translational modification Proline amide.

The polypeptide is Calcitonin-like peptide 1 (Odorrana schmackeri (Schmacker's frog)).